We begin with the raw amino-acid sequence, 287 residues long: Protease HtpX (287 aa).

The next 2 helical transmembrane spans lie at 4–24 (IMLFLATNLAVVLVLSVVLNI) and 36–56 (LSGLLVMAAVFGFGGALISLM). Residue His143 coordinates Zn(2+). Residue Glu144 is part of the active site. His147 contacts Zn(2+). 2 helical membrane passes run 158–178 (LMQGVVNTFVIFLSRFIANIV) and 192–212 (MVYFGVSMVLELVFGFLASFI). Residue Glu221 coordinates Zn(2+).

This sequence belongs to the peptidase M48B family. It depends on Zn(2+) as a cofactor.

It is found in the cell inner membrane. In Vibrio parahaemolyticus serotype O3:K6 (strain RIMD 2210633), this protein is Protease HtpX.